The primary structure comprises 336 residues: tRNA-cytidine(32) 2-sulfurtransferase (336 aa).

Residues 1 to 42 (MNAPDTLTGLEANAPVTEEAPAASEAERKRAHTRREQKEQYE) are disordered. The PP-loop motif signature appears at 75–80 (SGGKDS). Residues Cys150, Cys153, and Cys241 each contribute to the [4Fe-4S] cluster site. The segment at 301-328 (PHGDIAFDEEPCSADSASNQTQRPSQTV) is disordered. Polar residues predominate over residues 315–328 (DSASNQTQRPSQTV).

This sequence belongs to the TtcA family. In terms of assembly, homodimer. Requires Mg(2+) as cofactor. It depends on [4Fe-4S] cluster as a cofactor.

Its subcellular location is the cytoplasm. It catalyses the reaction cytidine(32) in tRNA + S-sulfanyl-L-cysteinyl-[cysteine desulfurase] + AH2 + ATP = 2-thiocytidine(32) in tRNA + L-cysteinyl-[cysteine desulfurase] + A + AMP + diphosphate + H(+). It participates in tRNA modification. In terms of biological role, catalyzes the ATP-dependent 2-thiolation of cytidine in position 32 of tRNA, to form 2-thiocytidine (s(2)C32). The sulfur atoms are provided by the cysteine/cysteine desulfurase (IscS) system. The polypeptide is tRNA-cytidine(32) 2-sulfurtransferase (Paraburkholderia phymatum (strain DSM 17167 / CIP 108236 / LMG 21445 / STM815) (Burkholderia phymatum)).